A 157-amino-acid polypeptide reads, in one-letter code: uncharacterized protein (157 aa).

This sequence belongs to the MG067/MG068/MG395 family.

This is an uncharacterized protein from Mycoplasma pneumoniae (strain ATCC 29342 / M129 / Subtype 1) (Mycoplasmoides pneumoniae).